A 299-amino-acid chain; its full sequence is ATP phosphoribosyltransferase (299 aa).

The protein belongs to the ATP phosphoribosyltransferase family. Long subfamily. Mg(2+) is required as a cofactor.

Its subcellular location is the cytoplasm. The enzyme catalyses 1-(5-phospho-beta-D-ribosyl)-ATP + diphosphate = 5-phospho-alpha-D-ribose 1-diphosphate + ATP. It functions in the pathway amino-acid biosynthesis; L-histidine biosynthesis; L-histidine from 5-phospho-alpha-D-ribose 1-diphosphate: step 1/9. Its activity is regulated as follows. Feedback inhibited by histidine. In terms of biological role, catalyzes the condensation of ATP and 5-phosphoribose 1-diphosphate to form N'-(5'-phosphoribosyl)-ATP (PR-ATP). Has a crucial role in the pathway because the rate of histidine biosynthesis seems to be controlled primarily by regulation of HisG enzymatic activity. This is ATP phosphoribosyltransferase (hisG) from Pasteurella multocida (strain Pm70).